A 178-amino-acid polypeptide reads, in one-letter code: Caveolin-1 (178 aa).

N-acetylserine is present on Ser-2. Phosphoserine is present on Ser-2. A required for homooligomerization region spans residues 2–94 (SGGKYVDAEG…WKASFTTFTV (93 aa)). Residues 2–104 (SGGKYVDAEG…TKYWFYRLLS (103 aa)) lie on the Cytoplasmic side of the membrane. N6-acetyllysine; alternate is present on Lys-5. Lys-5 participates in a covalent cross-link: Glycyl lysine isopeptide (Lys-Gly) (interchain with G-Cter in ubiquitin); alternate. The residue at position 6 (Tyr-6) is a Phosphotyrosine. Phosphotyrosine; by ABL1 is present on Tyr-14. The residue at position 25 (Tyr-25) is a Phosphotyrosine. Glycyl lysine isopeptide (Lys-Gly) (interchain with G-Cter in ubiquitin) cross-links involve residues Lys-26, Lys-30, Lys-39, Lys-47, and Lys-57. The segment at 82–94 (DGIWKASFTTFTV) is interaction with CAVIN3. Positions 105-125 (ALLGIPLALLWGIYFAILSFL) form an intramembrane region, helical. Residues 126–178 (HIWAVVPCIRSYLIEIQCISRVYSICIHTFCDPLFEAIGKVFSNIRATVQKEI) lie on the Cytoplasmic side of the membrane. Residues 131–142 (VPCIRSYLIEIQ) form an interacts with SPRY1, SPRY2, SPRY3 and SPRY4 region. Residues Cys-133, Cys-143, and Cys-156 are each lipidated (S-palmitoyl cysteine). The interacts with SPRY1, SPRY2, and SPRY4 stretch occupies residues 149–160 (SICIHTFCDPLF). Residues 167-178 (FSNIRATVQKEI) form an interacts with SPRY1, SPRY2, SPRY3 and SPRY4 region.

It belongs to the caveolin family. In terms of assembly, homooligomer. Interacts with GLIPR2. Interacts with NOSTRIN. Interacts with SNAP25 and STX1A. Interacts (via the N-terminus) with DPP4; the interaction is direct. Interacts with CTNNB1, CDH1 and JUP. Interacts with PACSIN2; this interaction induces membrane tubulation. Interacts with SLC7A9. Interacts with BMX and BTK. Interacts with TGFBR1. Interacts with CAVIN3 (via leucine-zipper domain) in a cholesterol-sensitive manner. Interacts with CAVIN1. Interacts with EHD2 in a cholesterol-dependent manner. Forms a ternary complex with UBXN6 and VCP; mediates CAV1 targeting to lysosomes for degradation. Interacts with ABCG1; this interaction regulates ABCG1-mediated cholesterol efflux. Interacts with NEU3; this interaction enhances NEU3 sialidase activity within caveola. Interacts (via C-terminus) with SPRY1, SPRY2 (via C-terminus), SPRY3, and SPRY4. Interacts with IGFBP5; this interaction allows trafficking of IGFBP5 from the plasma membrane to the nucleus. Phosphorylated at Tyr-14 by ABL1 in response to oxidative stress. Post-translationally, ubiquitinated. Undergo monoubiquitination and multi- and/or polyubiquitination. Monoubiquitination of N-terminal lysines promotes integration in a ternary complex with UBXN6 and VCP which promotes oligomeric CAV1 targeting to lysosomes for degradation. Ubiquitinated by ZNRF1; leading to degradation and modulation of the TLR4-mediated immune response.

The protein localises to the golgi apparatus membrane. It is found in the cell membrane. Its subcellular location is the membrane. It localises to the caveola. The protein resides in the membrane raft. Functionally, may act as a scaffolding protein within caveolar membranes. Forms a stable heterooligomeric complex with CAV2 that targets to lipid rafts and drives caveolae formation. Mediates the recruitment of CAVIN proteins (CAVIN1/2/3/4) to the caveolae. Interacts directly with G-protein alpha subunits and can functionally regulate their activity. Involved in the costimulatory signal essential for T-cell receptor (TCR)-mediated T-cell activation. Its binding to DPP4 induces T-cell proliferation and NF-kappa-B activation in a T-cell receptor/CD3-dependent manner. Recruits CTNNB1 to caveolar membranes and may regulate CTNNB1-mediated signaling through the Wnt pathway. Negatively regulates TGFB1-mediated activation of SMAD2/3 by mediating the internalization of TGFBR1 from membrane rafts leading to its subsequent degradation. Binds 20(S)-hydroxycholesterol (20(S)-OHC). The protein is Caveolin-1 (CAV1) of Ornithorhynchus anatinus (Duckbill platypus).